The chain runs to 86 residues: MSKGHSLQDPYLNTLRKERVPVSIYLVNGIKLQGQIESFDQFVILLKNTVSQMVYKHAISTVVPSRPVRLPSAGDSEQADAEPGNA.

In terms of domain architecture, Sm spans 9-68; it reads DPYLNTLRKERVPVSIYLVNGIKLQGQIESFDQFVILLKNTVSQMVYKHAISTVVPSRPV. The tract at residues 66–86 is disordered; it reads RPVRLPSAGDSEQADAEPGNA.

The protein belongs to the Hfq family. Homohexamer.

Functionally, RNA chaperone that binds small regulatory RNA (sRNAs) and mRNAs to facilitate mRNA translational regulation in response to envelope stress, environmental stress and changes in metabolite concentrations. Also binds with high specificity to tRNAs. The sequence is that of RNA-binding protein Hfq from Ectopseudomonas mendocina (strain ymp) (Pseudomonas mendocina).